A 315-amino-acid polypeptide reads, in one-letter code: Methionyl-tRNA formyltransferase (315 aa).

113–116 contributes to the (6S)-5,6,7,8-tetrahydrofolate binding site; it reads SLLP.

It belongs to the Fmt family.

The catalysed reaction is L-methionyl-tRNA(fMet) + (6R)-10-formyltetrahydrofolate = N-formyl-L-methionyl-tRNA(fMet) + (6S)-5,6,7,8-tetrahydrofolate + H(+). Its function is as follows. Attaches a formyl group to the free amino group of methionyl-tRNA(fMet). The formyl group appears to play a dual role in the initiator identity of N-formylmethionyl-tRNA by promoting its recognition by IF2 and preventing the misappropriation of this tRNA by the elongation apparatus. The polypeptide is Methionyl-tRNA formyltransferase (Escherichia coli (strain SE11)).